A 422-amino-acid polypeptide reads, in one-letter code: Mitogen-activated protein kinase spm1 (422 aa).

Residues 21-314 (FKVVKELGQG…VDDALEHPYL (294 aa)) enclose the Protein kinase domain. ATP is bound by residues 27–35 (LGQGAYGIV) and K52. D149 acts as the Proton acceptor in catalysis. Phosphothreonine is present on T186. Positions 186–188 (TEY) match the TXY motif. Y188 bears the Phosphotyrosine mark. The interval 359–422 (RRRSHPTNPT…DHKSDDNRHN (64 aa)) is disordered. Residues 364–379 (PTNPTVNIPQPAQTVP) are compositionally biased toward polar residues. The segment covering 380–397 (SNDNGSFNVSSSSSSQTS) has biased composition (low complexity). Residues 411 to 422 (AIDHKSDDNRHN) are compositionally biased toward basic and acidic residues.

The protein belongs to the protein kinase superfamily. CMGC Ser/Thr protein kinase family. MAP kinase subfamily. Mg(2+) is required as a cofactor. Dually phosphorylated on Thr-186 and Tyr-188, which activates the enzyme.

It catalyses the reaction L-seryl-[protein] + ATP = O-phospho-L-seryl-[protein] + ADP + H(+). The catalysed reaction is L-threonyl-[protein] + ATP = O-phospho-L-threonyl-[protein] + ADP + H(+). With respect to regulation, activated by tyrosine and threonine phosphorylation by skh1/pek1. Its function is as follows. Regulates cell integrity and functions coordinately with the protein kinase C pathway (pck1 and pck2). Involved the regulation of wall architecture, cell shape, cytokinesis in exponential and stationary phase, and metabolism of ions. The chain is Mitogen-activated protein kinase spm1 (spm1) from Schizosaccharomyces pombe (strain 972 / ATCC 24843) (Fission yeast).